The primary structure comprises 500 residues: Protein adenylyltransferase Fic (500 aa).

A helical transmembrane segment spans residues 39 to 59 (LSFLIFFVIGSLFSGLMFALL). TPR repeat units follow at residues 122–155 (ALSS…SPRH) and 156–190 (PEIL…NPSH). Residues 247–252 (SVGIEG) carry the Inhibitory (S/T)XXXE(G/N) motif motif. ATP contacts are provided by residues Glu-251 and 333 to 336 (VGGH). Positions 302–437 (ITLKDLLEIH…IRPFVRFIAD (136 aa)) constitute a Fido domain. Residue His-380 is part of the active site. ATP-binding positions include 384–391 (DGNGRTSR), 416–417 (YY), and Asn-424. The tract at residues 477 to 500 (GREGGSTVHEGSGTGDSIRIGTMW) is disordered.

This sequence belongs to the fic family. In terms of assembly, homodimer.

The protein localises to the membrane. The enzyme catalyses L-tyrosyl-[protein] + ATP = O-(5'-adenylyl)-L-tyrosyl-[protein] + diphosphate. It carries out the reaction L-threonyl-[protein] + ATP = 3-O-(5'-adenylyl)-L-threonyl-[protein] + diphosphate. It catalyses the reaction 3-O-(5'-adenylyl)-L-threonyl-[protein] + H2O = L-threonyl-[protein] + AMP + H(+). The side chain of Glu-251 determines which of the two opposing activities (AMPylase or de-AMPylase) will take place. In response to endoplasmic reticulum stress, mediates de-AMPylase activity. Adenylyltransferase activity is inhibited by the inhibitory helix present at the N-terminus: Glu-251 binds ATP and competes with ATP-binding at Arg-391, thereby preventing adenylyltransferase activity. In unstressed cells, disengagement of Glu-251 promotes adenylyltransferase activity. Activation dissociates ATP-binding from Glu-251, allowing ordered binding of the entire ATP moiety with the alpha-phosphate in an orientation that is productive for accepting an incoming target hydroxyl side chain. Protein that can both mediate the addition of adenosine 5'-monophosphate (AMP) to specific residues of target proteins (AMPylation), and the removal of the same modification from target proteins (de-AMPylation), depending on the context. The side chain of Glu-251 determines which of the two opposing activities (AMPylase or de-AMPylase) will take place. Acts as a key regulator of the unfolded protein response (UPR) by mediating AMPylation or de-AMPylation of Hsc70-3/BiP. In unstressed cells, acts as an adenylyltransferase by mediating AMPylation of Hsc70-3/BiP at 'Thr-518', thereby inactivating it. In response to endoplasmic reticulum stress, acts as a phosphodiesterase by mediating removal of ATP (de-AMPylation) from Hsc70-3/BiP at 'Thr-518', leading to restore HSPA5/BiP activity. This chain is Protein adenylyltransferase Fic, found in Culex quinquefasciatus (Southern house mosquito).